Here is a 515-residue protein sequence, read N- to C-terminus: Bifunctional pantoate ligase/cytidylate kinase (515 aa).

Residues 1 to 279 (MKVVETVARL…VGSTRLIDNV (279 aa)) form a pantoate--beta-alanine ligase region. 31-38 (MGALHEGH) lines the ATP pocket. Histidine 38 (proton donor) is an active-site residue. (R)-pantoate is bound at residue glutamine 62. Beta-alanine is bound at residue glutamine 62. Position 149-152 (149-152 (GQKD)) interacts with ATP. Glutamine 155 contributes to the (R)-pantoate binding site. ATP contacts are provided by residues valine 178 and 186–189 (LSSR). The tract at residues 280 to 515 (VLGQHHERRP…LYRDKVGGSV (236 aa)) is cytidylate kinase.

This sequence in the N-terminal section; belongs to the pantothenate synthetase family. The protein in the C-terminal section; belongs to the cytidylate kinase family. Type 1 subfamily.

The protein localises to the cytoplasm. It catalyses the reaction (R)-pantoate + beta-alanine + ATP = (R)-pantothenate + AMP + diphosphate + H(+). The enzyme catalyses CMP + ATP = CDP + ADP. The catalysed reaction is dCMP + ATP = dCDP + ADP. Its pathway is cofactor biosynthesis; (R)-pantothenate biosynthesis; (R)-pantothenate from (R)-pantoate and beta-alanine: step 1/1. In terms of biological role, catalyzes the condensation of pantoate with beta-alanine in an ATP-dependent reaction via a pantoyl-adenylate intermediate. Functionally, catalyzes the transfer of a phosphate group from ATP to either CMP or dCMP to form CDP or dCDP and ADP, respectively. The polypeptide is Bifunctional pantoate ligase/cytidylate kinase (Gloeobacter violaceus (strain ATCC 29082 / PCC 7421)).